We begin with the raw amino-acid sequence, 1086 residues long: NAD(P) transhydrogenase, mitochondrial (1086 aa).

Residues 1 to 43 (MAHLLKTVVAGCSCPFLSNLGSSKVLPGKRDFVRTLRTHQALW) constitute a mitochondrion transit peptide. Topologically, residues 44–474 (CKSPVKPGIP…TVSMYTKTLT (431 aa)) are mitochondrial matrix. An N6-acetyllysine modification is found at Lys70. Residue Lys117 is modified to N6-succinyllysine. Position 182-184 (182-184 (RVT)) interacts with NAD(+). Lys224 is subject to N6-succinyllysine. NAD(+) contacts are provided by residues Val237, 257–259 (DTR), and Gly287. Lys294 carries the N6-succinyllysine modification. 2 residues coordinate NAD(+): Glu300 and Leu319. An N6-succinyllysine modification is found at Lys331. Lys397 is modified (N6-acetyllysine). 4 helical membrane passes run 475–493 (TASV…GIVA), 501–521 (MVTT…GVTP), 527–546 (LMSV…LALM), and 558–578 (SLAA…FLVT). Residues 579 to 595 (QRMLDMFKRPTDPPEYN) lie on the Mitochondrial matrix side of the membrane. The next 5 membrane-spanning stretches (helical) occupy residues 596–616 (YLYL…LYGG), 622–642 (IMYL…STQG), 646–666 (LGNA…LGGL), 672–691 (LLAQ…LTIA), and 702–722 (LVAA…MAEY). Residues 723 to 739 (IVEYPHFAMDATSNFTK) are Cytoplasmic-facing. A run of 5 helical transmembrane segments spans residues 740–760 (IVAY…LVAY), 778–797 (HALN…PFMA), 801–819 (FTTG…TLMG), 833–853 (VVIT…GFLL), and 857–879 (LLTI…MCVA). Over 880–1086 (MNRSLANVIL…QAKVRESYQK (207 aa)) the chain is Mitochondrial matrix. NADP(+)-binding positions include Tyr933, 965–970 (VAGRMP), 1007–1011 (GANDT), 1026–1027 (GM), 1042–1049 (KRSLGVGY), and 1068–1069 (DA). Position 1079 is an N6-succinyllysine (Lys1079).

The protein in the N-terminal section; belongs to the AlaDH/PNT family. This sequence in the C-terminal section; belongs to the PNT beta subunit family. In terms of assembly, homodimer. As to expression, widely expressed with expression most readily detectable in adrenal, heart, kidney, thyroid and adipose tissues.

It is found in the mitochondrion inner membrane. The catalysed reaction is NAD(+) + NADPH + H(+)(in) = NADH + NADP(+) + H(+)(out). Functionally, the transhydrogenation between NADH and NADP is coupled to respiration and ATP hydrolysis and functions as a proton pump across the membrane. May play a role in reactive oxygen species (ROS) detoxification in the adrenal gland. The protein is NAD(P) transhydrogenase, mitochondrial (Nnt) of Mus musculus (Mouse).